Consider the following 239-residue polypeptide: Phosphoribosylaminoimidazole-succinocarboxamide synthase (239 aa).

It belongs to the SAICAR synthetase family.

It catalyses the reaction 5-amino-1-(5-phospho-D-ribosyl)imidazole-4-carboxylate + L-aspartate + ATP = (2S)-2-[5-amino-1-(5-phospho-beta-D-ribosyl)imidazole-4-carboxamido]succinate + ADP + phosphate + 2 H(+). It functions in the pathway purine metabolism; IMP biosynthesis via de novo pathway; 5-amino-1-(5-phospho-D-ribosyl)imidazole-4-carboxamide from 5-amino-1-(5-phospho-D-ribosyl)imidazole-4-carboxylate: step 1/2. This chain is Phosphoribosylaminoimidazole-succinocarboxamide synthase, found in Bacillus cereus (strain 03BB102).